We begin with the raw amino-acid sequence, 354 residues long: Deubiquitination-protection protein dph1 (354 aa).

A Ubiquitin-like domain is found at Met1–Gln78. A UBA domain is found at Pro309–Asp353.

Protects ubiquitin chains against dissambly by deubiquitinating enzymes thereby promoting protein degradation. In Schizosaccharomyces pombe (strain 972 / ATCC 24843) (Fission yeast), this protein is Deubiquitination-protection protein dph1 (dph1).